Consider the following 356-residue polypeptide: 5-formaminoimidazole-4-carboxamide-1-(beta)-D-ribofuranosyl 5'-monophosphate synthetase (356 aa).

The 5-amino-1-(5-phospho-beta-D-ribosyl)imidazole-4-carboxamide site is built by His-27 and Ser-94. An ATP-grasp domain is found at 101–333; it reads TENFAELTVP…YADLIQEDLS (233 aa). Residues 145-196 and Glu-226 each bind ATP; that span reads PRDI…TRYY. Asn-255 contacts 5-amino-1-(5-phospho-beta-D-ribosyl)imidazole-4-carboxamide. Residues Glu-293 and Glu-306 each coordinate Mg(2+).

Belongs to the phosphohexose mutase family. It depends on Mg(2+) as a cofactor. The cofactor is Mn(2+).

It catalyses the reaction 5-amino-1-(5-phospho-beta-D-ribosyl)imidazole-4-carboxamide + formate + ATP = 5-formamido-1-(5-phospho-D-ribosyl)imidazole-4-carboxamide + ADP + phosphate. Its pathway is purine metabolism; IMP biosynthesis via de novo pathway; 5-formamido-1-(5-phospho-D-ribosyl)imidazole-4-carboxamide from 5-amino-1-(5-phospho-D-ribosyl)imidazole-4-carboxamide (formate route): step 1/1. Catalyzes the ATP- and formate-dependent formylation of 5-aminoimidazole-4-carboxamide-1-beta-d-ribofuranosyl 5'-monophosphate (AICAR) to 5-formaminoimidazole-4-carboxamide-1-beta-d-ribofuranosyl 5'-monophosphate (FAICAR) in the absence of folates. The sequence is that of 5-formaminoimidazole-4-carboxamide-1-(beta)-D-ribofuranosyl 5'-monophosphate synthetase from Methanosarcina acetivorans (strain ATCC 35395 / DSM 2834 / JCM 12185 / C2A).